Here is a 412-residue protein sequence, read N- to C-terminus: Short-chain specific acyl-CoA dehydrogenase, mitochondrial (412 aa).

A mitochondrion-targeting transit peptide spans Met-1–Arg-24. Thr-27 is subject to Phosphothreonine. Lys-51 carries the post-translational modification N6-acetyllysine; alternate. Lys-51 is modified (N6-succinyllysine; alternate). Lys-72 bears the N6-acetyllysine mark. At Lys-129 the chain carries N6-acetyllysine; alternate. The residue at position 129 (Lys-129) is an N6-succinyllysine; alternate. FAD contacts are provided by residues Phe-152–Ser-161 and Trp-185–Thr-187. Ser-161 serves as a coordination point for substrate. Lys-208 bears the N6-acetyllysine mark. The residue at position 262 (Lys-262) is an N6-acetyllysine; alternate. Lys-262 is modified (N6-succinyllysine; alternate). Residue Asp-269–Arg-272 participates in substrate binding. An N6-acetyllysine modification is found at Lys-292. Position 297 (Arg-297) interacts with FAD. Lys-306 bears the N6-acetyllysine; alternate mark. Lys-306 carries the N6-succinyllysine; alternate modification. FAD is bound by residues Gln-308 and Gln-365–Gly-369. Residue Glu-392 is the Proton acceptor of the active site. Gly-393 contacts substrate. Position 394–396 (Thr-394–Glu-396) interacts with FAD.

This sequence belongs to the acyl-CoA dehydrogenase family. Homotetramer. The cofactor is FAD.

The protein localises to the mitochondrion matrix. It catalyses the reaction a short-chain 2,3-saturated fatty acyl-CoA + oxidized [electron-transfer flavoprotein] + H(+) = a short-chain (2E)-enoyl-CoA + reduced [electron-transfer flavoprotein]. It carries out the reaction butanoyl-CoA + oxidized [electron-transfer flavoprotein] + H(+) = (2E)-butenoyl-CoA + reduced [electron-transfer flavoprotein]. The catalysed reaction is pentanoyl-CoA + oxidized [electron-transfer flavoprotein] + H(+) = (2E)-pentenoyl-CoA + reduced [electron-transfer flavoprotein]. The enzyme catalyses hexanoyl-CoA + oxidized [electron-transfer flavoprotein] + H(+) = (2E)-hexenoyl-CoA + reduced [electron-transfer flavoprotein]. The protein operates within lipid metabolism; mitochondrial fatty acid beta-oxidation. Functionally, short-chain specific acyl-CoA dehydrogenase is one of the acyl-CoA dehydrogenases that catalyze the first step of mitochondrial fatty acid beta-oxidation, an aerobic process breaking down fatty acids into acetyl-CoA and allowing the production of energy from fats. The first step of fatty acid beta-oxidation consists in the removal of one hydrogen from C-2 and C-3 of the straight-chain fatty acyl-CoA thioester, resulting in the formation of trans-2-enoyl-CoA. Among the different mitochondrial acyl-CoA dehydrogenases, short-chain specific acyl-CoA dehydrogenase acts specifically on acyl-CoAs with saturated 4 to 6 carbons long primary chains. This chain is Short-chain specific acyl-CoA dehydrogenase, mitochondrial (Acads), found in Mus musculus (Mouse).